A 116-amino-acid chain; its full sequence is Small ribosomal subunit protein uS17 (116 aa).

It belongs to the universal ribosomal protein uS17 family. Part of the 30S ribosomal subunit.

In terms of biological role, one of the primary rRNA binding proteins, it binds specifically to the 5'-end of 16S ribosomal RNA. The chain is Small ribosomal subunit protein uS17 from Pyrococcus horikoshii (strain ATCC 700860 / DSM 12428 / JCM 9974 / NBRC 100139 / OT-3).